The primary structure comprises 228 residues: MSSTQIRTEIPVALLILCLCLVACHANCPTYRSHLGFWQEGWSGQVYQDWLGRMNCSYENMTALEAVSLNGTRLAAGSPSSEYPNVSVSVEDTSASGSGEDAIDESGSGEEERPVTSHVTFMTQSVQATTELTDALISAFSGSYSSGEPSRTTRIRVSPVAENGRNSGASNRVPFSATTTTTRGRDAHYNAEIRTHLYILWAVGLLLGLVLILYLCVPRCRRKKPYIV.

The first 26 residues, 1–26, serve as a signal peptide directing secretion; that stretch reads MSSTQIRTEIPVALLILCLCLVACHA. N-linked (GlcNAc...) asparagine; by host glycosylation is found at asparagine 55, asparagine 60, asparagine 70, and asparagine 85. A disordered region spans residues 77–113; it reads GSPSSEYPNVSVSVEDTSASGSGEDAIDESGSGEEER. Residues 78 to 97 are compositionally biased toward polar residues; that stretch reads SPSSEYPNVSVSVEDTSASG. Residues 197-217 traverse the membrane as a helical segment; sequence LYILWAVGLLLGLVLILYLCV.

The protein resides in the host membrane. The protein is Protein K8.1 (K8.1) of Human herpesvirus 8 type P (isolate GK18) (HHV-8).